The chain runs to 187 residues: Ribosome maturation factor RimM (187 aa).

The 93-residue stretch at 91 to 183 (DDGFYDHELE…ILVLTPPEGL (93 aa)) folds into the PRC barrel domain.

Belongs to the RimM family. In terms of assembly, binds ribosomal protein uS19.

Its subcellular location is the cytoplasm. An accessory protein needed during the final step in the assembly of 30S ribosomal subunit, possibly for assembly of the head region. Essential for efficient processing of 16S rRNA. May be needed both before and after RbfA during the maturation of 16S rRNA. It has affinity for free ribosomal 30S subunits but not for 70S ribosomes. The sequence is that of Ribosome maturation factor RimM from Corynebacterium jeikeium (strain K411).